Here is a 484-residue protein sequence, read N- to C-terminus: Ribosomal RNA small subunit methyltransferase F (484 aa).

Residues 126-132, glutamate 150, aspartate 177, and aspartate 195 contribute to the S-adenosyl-L-methionine site; that span reads AAAPGSK. The active-site Nucleophile is the cysteine 248.

The protein belongs to the class I-like SAM-binding methyltransferase superfamily. RsmB/NOP family.

It localises to the cytoplasm. The enzyme catalyses cytidine(1407) in 16S rRNA + S-adenosyl-L-methionine = 5-methylcytidine(1407) in 16S rRNA + S-adenosyl-L-homocysteine + H(+). Specifically methylates the cytosine at position 1407 (m5C1407) of 16S rRNA. The chain is Ribosomal RNA small subunit methyltransferase F from Pectobacterium atrosepticum (strain SCRI 1043 / ATCC BAA-672) (Erwinia carotovora subsp. atroseptica).